Here is a 769-residue protein sequence, read N- to C-terminus: Amino-acid acetyltransferase, mitochondrial (769 aa).

The interval 150–172 is disordered; the sequence is LKASPAKSGQEPTESPKESISAS. A compositionally biased stretch (polar residues) spans 159 to 172; the sequence is QEPTESPKESISAS. The 170-residue stretch at 590-759 folds into the N-acetyltransferase domain; it reads MQPRLGLNDP…YEAVCRSIQP (170 aa).

It belongs to the acetyltransferase family.

The protein localises to the mitochondrion. The catalysed reaction is L-glutamate + acetyl-CoA = N-acetyl-L-glutamate + CoA + H(+). It functions in the pathway amino-acid biosynthesis; L-arginine biosynthesis; N(2)-acetyl-L-ornithine from L-glutamate: step 1/4. Its function is as follows. N-acetylglutamate synthase involved in arginine biosynthesis. This Penicillium rubens (strain ATCC 28089 / DSM 1075 / NRRL 1951 / Wisconsin 54-1255) (Penicillium chrysogenum) protein is Amino-acid acetyltransferase, mitochondrial (arg2).